We begin with the raw amino-acid sequence, 187 residues long: Elongation factor P (187 aa).

It belongs to the elongation factor P family.

The protein localises to the cytoplasm. The protein operates within protein biosynthesis; polypeptide chain elongation. Involved in peptide bond synthesis. Stimulates efficient translation and peptide-bond synthesis on native or reconstituted 70S ribosomes in vitro. Probably functions indirectly by altering the affinity of the ribosome for aminoacyl-tRNA, thus increasing their reactivity as acceptors for peptidyl transferase. This Tolumonas auensis (strain DSM 9187 / NBRC 110442 / TA 4) protein is Elongation factor P.